The following is a 172-amino-acid chain: Endoribonuclease YbeY (172 aa).

3 residues coordinate Zn(2+): histidine 134, histidine 138, and histidine 144.

It belongs to the endoribonuclease YbeY family. It depends on Zn(2+) as a cofactor.

The protein resides in the cytoplasm. Functionally, single strand-specific metallo-endoribonuclease involved in late-stage 70S ribosome quality control and in maturation of the 3' terminus of the 16S rRNA. In Burkholderia cenocepacia (strain HI2424), this protein is Endoribonuclease YbeY.